The primary structure comprises 542 residues: MVSVKASAAEKKEFLQSQIDEIEKWWSEPRWKDTKRIYSAYEIAKRRGSVKPNTFPSTVMSQKLFKILGEHAKNGTVSKTFGALDPVQVTQMSKYLDTIYVSGWQCSSTASTSNEPGPDLADYPMDTVPNKVEHLFKAQQFHDRKQWERICDGTIEESEIIDYLTPIVADGDAGHGGLTAVFKLTKMFIERGAAGIHIEDQTSTNKKCGHMAGRCVIPVQEHINRLITCRMAADVLGSDLILVARTDSEAATLLSSTADSRDHYFILGASNPAVKGKPLNDLLNKAILDGATIDDLQTIEKEWLAKADVKLFHEVFADAAKAAGKDQSVIDQFNSKVNPLSETSIYEMQALAKELLGTELFFDWDLPRGREGLYRYQGGTQCSVMRARAFAPYADLCWMESNYPDYEQAKEFAEGVTAKFPGKWMAYNLSPSFNWTKAMSVDEQETFIQRLGDLGYIWQFITLAGLHTSGLAIEQFSKNFAKLGMKAYAQDIQKKELDNGIDMVKHQKWSGAEYIDGLLRLAQGGLAATAAMGQGVTEDQFK.

102 to 104 (SGW) is a binding site for substrate. Asp-170 provides a ligand contact to Mg(2+). Cys-208 serves as the catalytic Proton acceptor. Substrate-binding positions include 209–210 (GH), Arg-245, 428–432 (NLSPS), and Thr-462.

This sequence belongs to the isocitrate lyase/PEP mutase superfamily. Isocitrate lyase family. In terms of assembly, homotetramer. It depends on Mg(2+) as a cofactor.

It is found in the glyoxysome. The catalysed reaction is D-threo-isocitrate = glyoxylate + succinate. It catalyses the reaction (2S,3R)-3-hydroxybutane-1,2,3-tricarboxylate = pyruvate + succinate. It functions in the pathway carbohydrate metabolism; glyoxylate cycle; (S)-malate from isocitrate: step 1/2. Catalyzes the formation of succinate and glyoxylate from isocitrate, a key step of the glyoxylate cycle, which operates as an anaplerotic route for replenishing the tricarboxylic acid cycle. Required for growth on ethanol or acetate, but dispensable when fermentable carbon sources are available. Also acts on 2-methylisocitrate. The chain is Isocitrate lyase from Kluyveromyces lactis (strain ATCC 8585 / CBS 2359 / DSM 70799 / NBRC 1267 / NRRL Y-1140 / WM37) (Yeast).